Consider the following 146-residue polypeptide: Protein PBDC1 homolog (146 aa).

This sequence belongs to the PBDC1 family.

The protein localises to the cytoplasm. The sequence is that of Protein PBDC1 homolog from Saccharomyces cerevisiae (strain ATCC 204508 / S288c) (Baker's yeast).